A 682-amino-acid polypeptide reads, in one-letter code: DNA ligase (682 aa).

NAD(+)-binding positions include 42–46 (DAAYD), 88–89 (SL), and Glu-121. Lys-123 functions as the N6-AMP-lysine intermediate in the catalytic mechanism. NAD(+) is bound by residues Arg-144, Glu-180, Lys-291, and Lys-315. Residues Cys-409, Cys-412, Cys-427, and Cys-433 each coordinate Zn(2+). Residues 601 to 682 (AAGGALAGKT…FRSLAGLPPG (82 aa)) enclose the BRCT domain.

Belongs to the NAD-dependent DNA ligase family. LigA subfamily. The cofactor is Mg(2+). Mn(2+) is required as a cofactor.

It carries out the reaction NAD(+) + (deoxyribonucleotide)n-3'-hydroxyl + 5'-phospho-(deoxyribonucleotide)m = (deoxyribonucleotide)n+m + AMP + beta-nicotinamide D-nucleotide.. Functionally, DNA ligase that catalyzes the formation of phosphodiester linkages between 5'-phosphoryl and 3'-hydroxyl groups in double-stranded DNA using NAD as a coenzyme and as the energy source for the reaction. It is essential for DNA replication and repair of damaged DNA. The protein is DNA ligase of Acidiphilium cryptum (strain JF-5).